The chain runs to 316 residues: Transaldolase A (316 aa).

K131 functions as the Schiff-base intermediate with substrate in the catalytic mechanism.

It belongs to the transaldolase family. Type 1 subfamily. As to quaternary structure, homodimer.

The protein resides in the cytoplasm. The enzyme catalyses D-sedoheptulose 7-phosphate + D-glyceraldehyde 3-phosphate = D-erythrose 4-phosphate + beta-D-fructose 6-phosphate. It participates in carbohydrate degradation; pentose phosphate pathway; D-glyceraldehyde 3-phosphate and beta-D-fructose 6-phosphate from D-ribose 5-phosphate and D-xylulose 5-phosphate (non-oxidative stage): step 2/3. Its function is as follows. Transaldolase is important for the balance of metabolites in the pentose-phosphate pathway. In Shigella flexneri, this protein is Transaldolase A.